Here is a 695-residue protein sequence, read N- to C-terminus: UvrABC system protein C (695 aa).

Residues 1 to 10 (MNQDPAETRD) show a composition bias toward basic and acidic residues. The tract at residues 1–53 (MNQDPAETRDTAAPPPADTTSPSPVSPELEPRSAPGAQDIDAASASLTVDEDD) is disordered. Low complexity predominate over residues 18 to 27 (DTTSPSPVSP). The GIY-YIG domain maps to 88–166 (TSPGVYRMLN…IKQLRPRFNV (79 aa)). Residues 276-311 (RAVKQELAVEMEKASNELEFETAALYRDRLAALSAI) form the UVR domain.

The protein belongs to the UvrC family. As to quaternary structure, interacts with UvrB in an incision complex.

It is found in the cytoplasm. In terms of biological role, the UvrABC repair system catalyzes the recognition and processing of DNA lesions. UvrC both incises the 5' and 3' sides of the lesion. The N-terminal half is responsible for the 3' incision and the C-terminal half is responsible for the 5' incision. In Rhodopseudomonas palustris (strain BisB5), this protein is UvrABC system protein C.